We begin with the raw amino-acid sequence, 423 residues long: Serine hydroxymethyltransferase (423 aa).

121–123 (GHI) provides a ligand contact to (6S)-5,6,7,8-tetrahydrofolate. K227 bears the N6-(pyridoxal phosphate)lysine mark. E242 lines the (6S)-5,6,7,8-tetrahydrofolate pocket.

The protein belongs to the SHMT family. Homodimer. Pyridoxal 5'-phosphate serves as cofactor.

Its subcellular location is the cytoplasm. It carries out the reaction 5,10-methylenetetrahydromethanopterin + glycine + H2O = 5,6,7,8-tetrahydromethanopterin + L-serine. It functions in the pathway amino-acid biosynthesis; glycine biosynthesis; glycine from L-serine: step 1/1. Catalyzes the reversible interconversion of serine and glycine with tetrahydromethanopterin (H4MPT) serving as the one-carbon carrier. Cannot use tetrahydrofolate (THF or H4PteGlu) instead of H4MPT as the pteridine substrate. Also probably exhibits a pteridine-independent aldolase activity toward beta-hydroxyamino acids, producing glycine and aldehydes, via a retro-aldol mechanism. This chain is Serine hydroxymethyltransferase, found in Methanothermobacter thermautotrophicus (strain ATCC 29096 / DSM 1053 / JCM 10044 / NBRC 100330 / Delta H) (Methanobacterium thermoautotrophicum).